The primary structure comprises 408 residues: Serine/threonine transporter SstT (408 aa).

A run of 9 helical transmembrane segments spans residues 14–34 (GNLILQICIGIVLGILIGIFS), 43–63 (IFGALFTGALKAIAPILVFIL), 83–103 (IIFLYIFGTFLASLSAVSISF), 143–163 (ALSSGNYLSILAWAIGGGFAL), 181–201 (VLKIVKFIVKLAPFGIFGLVA), 219–239 (LIILVLTMFFVAFVINALIVF), 247–269 (YPLIFICLKHSAVFAFFTRSSAA), 290–310 (ISIPLGATINMAGAAVTIAIL), and 332–352 (VLAAFAACGASGVAGGSLLLI).

This sequence belongs to the dicarboxylate/amino acid:cation symporter (DAACS) (TC 2.A.23) family.

The protein localises to the cell inner membrane. The catalysed reaction is L-serine(in) + Na(+)(in) = L-serine(out) + Na(+)(out). It catalyses the reaction L-threonine(in) + Na(+)(in) = L-threonine(out) + Na(+)(out). Involved in the import of serine and threonine into the cell, with the concomitant import of sodium (symport system). This chain is Serine/threonine transporter SstT, found in Campylobacter lari (strain RM2100 / D67 / ATCC BAA-1060).